Reading from the N-terminus, the 348-residue chain is Dihydroorotase (348 aa).

Zn(2+) contacts are provided by His17 and His19. Substrate is bound by residues 19-21 (HLR) and Asn45. Zn(2+) contacts are provided by Lys103, His140, and His178. Lys103 carries the post-translational modification N6-carboxylysine. A substrate-binding site is contributed by His140. Residue Leu223 participates in substrate binding. Residue Asp251 coordinates Zn(2+). The active site involves Asp251. Substrate-binding residues include His255 and Ala267.

The protein belongs to the metallo-dependent hydrolases superfamily. DHOase family. Class II DHOase subfamily. In terms of assembly, homodimer. It depends on Zn(2+) as a cofactor.

It catalyses the reaction (S)-dihydroorotate + H2O = N-carbamoyl-L-aspartate + H(+). Its pathway is pyrimidine metabolism; UMP biosynthesis via de novo pathway; (S)-dihydroorotate from bicarbonate: step 3/3. Catalyzes the reversible cyclization of carbamoyl aspartate to dihydroorotate. The protein is Dihydroorotase of Shigella flexneri.